A 248-amino-acid polypeptide reads, in one-letter code: Transmembrane protein 223 (248 aa).

3 consecutive transmembrane segments (helical) span residues 46–68 (IFRPLVFPVRVASAFTFTSAAVA), 84–104 (LLAIFCGGQFLFWAYLGHFAF), and 140–160 (YGFTSGCLIIGGGILALALLF).

It belongs to the TMEM223 family.

The protein localises to the mitochondrion inner membrane. Its function is as follows. Mitochondrial ribosome-associated protein involved in the first steps of cytochrome c oxidase complex (complex IV) biogenesis. Stimulates the translation of MT-CO1 mRNA and is a constituent of early MT-CO1 assembly intermediates. This chain is Transmembrane protein 223, found in Danio rerio (Zebrafish).